The primary structure comprises 427 residues: Serine--tRNA ligase (427 aa).

Residue 236 to 238 coordinates L-serine; that stretch reads TAE. 267-269 contacts ATP; that stretch reads RSE. An L-serine-binding site is contributed by Glu-290. Residue 354–357 participates in ATP binding; that stretch reads EISS. Ser-388 serves as a coordination point for L-serine.

It belongs to the class-II aminoacyl-tRNA synthetase family. Type-1 seryl-tRNA synthetase subfamily. Homodimer. The tRNA molecule binds across the dimer.

The protein resides in the cytoplasm. It catalyses the reaction tRNA(Ser) + L-serine + ATP = L-seryl-tRNA(Ser) + AMP + diphosphate + H(+). The catalysed reaction is tRNA(Sec) + L-serine + ATP = L-seryl-tRNA(Sec) + AMP + diphosphate + H(+). It participates in aminoacyl-tRNA biosynthesis; selenocysteinyl-tRNA(Sec) biosynthesis; L-seryl-tRNA(Sec) from L-serine and tRNA(Sec): step 1/1. Catalyzes the attachment of serine to tRNA(Ser). Is also able to aminoacylate tRNA(Sec) with serine, to form the misacylated tRNA L-seryl-tRNA(Sec), which will be further converted into selenocysteinyl-tRNA(Sec). In Psychrobacter arcticus (strain DSM 17307 / VKM B-2377 / 273-4), this protein is Serine--tRNA ligase.